The following is a 273-amino-acid chain: Rhamnulose-1-phosphate aldolase (273 aa).

Residue glutamate 117 is part of the active site. Residues histidine 140, histidine 142, and histidine 211 each coordinate Zn(2+).

This sequence belongs to the aldolase class II family. RhaD subfamily. The cofactor is Zn(2+).

The protein localises to the cytoplasm. The catalysed reaction is L-rhamnulose 1-phosphate = (S)-lactaldehyde + dihydroxyacetone phosphate. It participates in carbohydrate degradation; L-rhamnose degradation; glycerone phosphate from L-rhamnose: step 3/3. In terms of biological role, catalyzes the reversible cleavage of L-rhamnulose-1-phosphate to dihydroxyacetone phosphate (DHAP) and L-lactaldehyde. The sequence is that of Rhamnulose-1-phosphate aldolase from Listeria innocua serovar 6a (strain ATCC BAA-680 / CLIP 11262).